We begin with the raw amino-acid sequence, 478 residues long: Multidrug resistance outer membrane protein MdtQ (478 aa).

The signal sequence occupies residues methionine 1 to glycine 21. Cysteine 22 carries N-palmitoyl cysteine lipidation. Residue cysteine 22 is the site of S-diacylglycerol cysteine attachment.

This sequence belongs to the outer membrane factor (OMF) (TC 1.B.17) family.

The protein resides in the cell outer membrane. Functionally, could be involved in resistance to puromycin, acriflavine and tetraphenylarsonium chloride. This chain is Multidrug resistance outer membrane protein MdtQ (mdtQ), found in Escherichia coli O157:H7.